The sequence spans 247 residues: tRNA pseudouridine synthase A (247 aa).

Catalysis depends on D52, which acts as the Nucleophile. Y113 lines the substrate pocket.

This sequence belongs to the tRNA pseudouridine synthase TruA family. In terms of assembly, homodimer.

The enzyme catalyses uridine(38/39/40) in tRNA = pseudouridine(38/39/40) in tRNA. Its function is as follows. Formation of pseudouridine at positions 38, 39 and 40 in the anticodon stem and loop of transfer RNAs. This is tRNA pseudouridine synthase A from Sinorhizobium fredii (strain NBRC 101917 / NGR234).